The following is a 255-amino-acid chain: Ribosomal RNA small subunit methyltransferase A (255 aa).

Positions 11, 13, 38, 59, 83, and 101 each coordinate S-adenosyl-L-methionine.

Belongs to the class I-like SAM-binding methyltransferase superfamily. rRNA adenine N(6)-methyltransferase family. RsmA subfamily.

It is found in the cytoplasm. It catalyses the reaction adenosine(1518)/adenosine(1519) in 16S rRNA + 4 S-adenosyl-L-methionine = N(6)-dimethyladenosine(1518)/N(6)-dimethyladenosine(1519) in 16S rRNA + 4 S-adenosyl-L-homocysteine + 4 H(+). Functionally, specifically dimethylates two adjacent adenosines (A1518 and A1519) in the loop of a conserved hairpin near the 3'-end of 16S rRNA in the 30S particle. May play a critical role in biogenesis of 30S subunits. The chain is Ribosomal RNA small subunit methyltransferase A from Thiobacillus denitrificans (strain ATCC 25259 / T1).